A 227-amino-acid polypeptide reads, in one-letter code: Cytochrome c oxidase subunit 2 (227 aa).

At Met1–Ser14 the chain is on the mitochondrial intermembrane side. Residues Pro15 to Met45 traverse the membrane as a helical segment. Residues Leu46–Gln59 are Mitochondrial matrix-facing. A helical transmembrane segment spans residues Glu60 to Met87. Topologically, residues Asp88–Leu227 are mitochondrial intermembrane. Positions 161, 196, 198, 200, 204, and 207 each coordinate Cu cation. A Mg(2+)-binding site is contributed by Glu198.

The protein belongs to the cytochrome c oxidase subunit 2 family. As to quaternary structure, component of the cytochrome c oxidase (complex IV, CIV), a multisubunit enzyme composed of 14 subunits. The complex is composed of a catalytic core of 3 subunits MT-CO1, MT-CO2 and MT-CO3, encoded in the mitochondrial DNA, and 11 supernumerary subunits COX4I, COX5A, COX5B, COX6A, COX6B, COX6C, COX7A, COX7B, COX7C, COX8 and NDUFA4, which are encoded in the nuclear genome. The complex exists as a monomer or a dimer and forms supercomplexes (SCs) in the inner mitochondrial membrane with NADH-ubiquinone oxidoreductase (complex I, CI) and ubiquinol-cytochrome c oxidoreductase (cytochrome b-c1 complex, complex III, CIII), resulting in different assemblies (supercomplex SCI(1)III(2)IV(1) and megacomplex MCI(2)III(2)IV(2)). Found in a complex with TMEM177, COA6, COX18, COX20, SCO1 and SCO2. Interacts with TMEM177 in a COX20-dependent manner. Interacts with COX20. Interacts with COX16. The cofactor is Cu cation.

The protein localises to the mitochondrion inner membrane. The enzyme catalyses 4 Fe(II)-[cytochrome c] + O2 + 8 H(+)(in) = 4 Fe(III)-[cytochrome c] + 2 H2O + 4 H(+)(out). Functionally, component of the cytochrome c oxidase, the last enzyme in the mitochondrial electron transport chain which drives oxidative phosphorylation. The respiratory chain contains 3 multisubunit complexes succinate dehydrogenase (complex II, CII), ubiquinol-cytochrome c oxidoreductase (cytochrome b-c1 complex, complex III, CIII) and cytochrome c oxidase (complex IV, CIV), that cooperate to transfer electrons derived from NADH and succinate to molecular oxygen, creating an electrochemical gradient over the inner membrane that drives transmembrane transport and the ATP synthase. Cytochrome c oxidase is the component of the respiratory chain that catalyzes the reduction of oxygen to water. Electrons originating from reduced cytochrome c in the intermembrane space (IMS) are transferred via the dinuclear copper A center (CU(A)) of subunit 2 and heme A of subunit 1 to the active site in subunit 1, a binuclear center (BNC) formed by heme A3 and copper B (CU(B)). The BNC reduces molecular oxygen to 2 water molecules using 4 electrons from cytochrome c in the IMS and 4 protons from the mitochondrial matrix. The polypeptide is Cytochrome c oxidase subunit 2 (MT-CO2) (Halichoerus grypus (Gray seal)).